A 428-amino-acid chain; its full sequence is MTMLDTTSTVAVSLYALLSTAYKSMQAVYSLPTDVSLASHGLGGFDELPSVDVIVPSFNEDPRTLSECLASIAGQEYGGRLQVYLVDDGSENREALRLVHEAFARDPRFNILLLPQNVGKRKAQDRCDQRSAGDMVLNVDSDTILASDVIRKLVPKNARVAVGRMGQLTGPQPKRQLADPFDDMEYWLACNEERSQQARFGCVMFCSGSCVMYRLVSASLLDQYDAQYFRKQRFGEIDIHLSHAEGSFRTEYRPSAHAATVVPNKLGPYLGQQLRWARSTFRTTLLGAPLPNLNRFLMLDVVGQNLGPLLLDHSVLTGLAQLALTGTAPWLAALMIVAMTIDRCSVVALRARQLRFLGFSLHTFINIFLLLPLKAYALCTLSNIAWLSSLLCWQLESTSTADARTTECSDMRTASKLSPPPSCQANDV.

Belongs to the NodC/HAS family.

It localises to the cell membrane. Its function is as follows. Involved in the synthesis of Nod factor, a sulfated N-acyl-beta-1,4-tetrasaccharide of N-acetylglucosamine which initiates a series of events in the host plant species leading eventually to nodulation. The protein is N-acetylglucosaminyltransferase (nodC) of Rhizobium leguminosarum bv. phaseoli.